A 513-amino-acid polypeptide reads, in one-letter code: ATP synthase subunit alpha (513 aa).

169–176 (GDRQTGKT) is an ATP binding site.

The protein belongs to the ATPase alpha/beta chains family. As to quaternary structure, F-type ATPases have 2 components, CF(1) - the catalytic core - and CF(0) - the membrane proton channel. CF(1) has five subunits: alpha(3), beta(3), gamma(1), delta(1), epsilon(1). CF(0) has three main subunits: a(1), b(2) and c(9-12). The alpha and beta chains form an alternating ring which encloses part of the gamma chain. CF(1) is attached to CF(0) by a central stalk formed by the gamma and epsilon chains, while a peripheral stalk is formed by the delta and b chains.

It localises to the cell inner membrane. The catalysed reaction is ATP + H2O + 4 H(+)(in) = ADP + phosphate + 5 H(+)(out). In terms of biological role, produces ATP from ADP in the presence of a proton gradient across the membrane. The alpha chain is a regulatory subunit. The protein is ATP synthase subunit alpha of Klebsiella pneumoniae (strain 342).